We begin with the raw amino-acid sequence, 119 residues long: Fluoride-specific ion channel FluC 2 (119 aa).

4 helical membrane passes run 1–21, 33–53, 56–76, and 93–113; these read MITVLTAGFGAIWGAILRYGI, FPYATLLINLTGAFLLGFIFS, FSPFIYALIGTGVLGGYTTFS, and VFTLYALLSYGGGLILVFLGY. Positions 70 and 73 each coordinate Na(+).

It belongs to the fluoride channel Fluc/FEX (TC 1.A.43) family.

It localises to the cell membrane. The catalysed reaction is fluoride(in) = fluoride(out). Na(+) is not transported, but it plays an essential structural role and its presence is essential for fluoride channel function. Functionally, fluoride-specific ion channel. Important for reducing fluoride concentration in the cell, thus reducing its toxicity. This chain is Fluoride-specific ion channel FluC 2, found in Lactobacillus johnsonii (strain CNCM I-12250 / La1 / NCC 533).